A 306-amino-acid polypeptide reads, in one-letter code: Glutaminase (306 aa).

Residues S64, N115, E159, N166, Y190, Y242, and V260 each coordinate substrate.

It belongs to the glutaminase family. Homotetramer.

It carries out the reaction L-glutamine + H2O = L-glutamate + NH4(+). The chain is Glutaminase from Photobacterium profundum (strain SS9).